A 102-amino-acid polypeptide reads, in one-letter code: MVIGLSHYLTVSAILFTLGVFGIFLNRKNVIVILMSIELILLAVNINMVAFSSFLNDIVGQVFALFILTVAAAEAAIGLAILVVFYRNRGSIAVEDVNMMKG.

The next 3 membrane-spanning stretches (helical) occupy residues 5–25 (LSHY…GIFL), 31–51 (IVIL…MVAF), and 65–85 (LFIL…LVVF).

Belongs to the complex I subunit 4L family. As to quaternary structure, NDH-1 is composed of 14 different subunits. Subunits NuoA, H, J, K, L, M, N constitute the membrane sector of the complex.

It localises to the cell inner membrane. It carries out the reaction a quinone + NADH + 5 H(+)(in) = a quinol + NAD(+) + 4 H(+)(out). Functionally, NDH-1 shuttles electrons from NADH, via FMN and iron-sulfur (Fe-S) centers, to quinones in the respiratory chain. The immediate electron acceptor for the enzyme in this species is believed to be ubiquinone. Couples the redox reaction to proton translocation (for every two electrons transferred, four hydrogen ions are translocated across the cytoplasmic membrane), and thus conserves the redox energy in a proton gradient. This chain is NADH-quinone oxidoreductase subunit K, found in Rhizobium johnstonii (strain DSM 114642 / LMG 32736 / 3841) (Rhizobium leguminosarum bv. viciae).